Here is a 343-residue protein sequence, read N- to C-terminus: MSNANNSAMNHITLPPISSFDNLIKAAERQYNGEASSASTHPTLPNMNISNGSGSAGASSSMLSYQLLPHSNDVSRSNSSSSFLPSVQQPTEGSASASETSSSASPSRSISPILKVAGPSSVGGAGVSTPHSTKINKPRKKKQCPICRNFYANLTTHKATHLTPEDRPHKCPICHRGFARNNDLLRHKKRHWKDEILSQSGVLSNHNDGKGGSVSPNDDDTHEKMTPMNSVTDYAQLKSLHQIKGTFKCPFNSTLIQLDMDMYPYKLKPLNFETSNCHQTGVFSRCDTFKNHLKALHFEYPPGTKKKDRNVVPGRCKHCGLKFENVDVWLNEHVGKQCGYKYH.

Disordered regions lie at residues 31-56 (YNGE…SGSA) and 71-140 (SNDV…KPRK). Polar residues predominate over residues 33 to 45 (GEASSASTHPTLP). Composition is skewed to low complexity over residues 46-56 (NMNISNGSGSA), 71-86 (SNDV…FLPS), and 94-120 (SASA…AGPS). Phosphoserine occurs at positions 71 and 111. The segment at 169 to 191 (HKCPICHRGFARNNDLLRHKKRH) adopts a C2H2-type zinc-finger fold. Residues 198–222 (SQSGVLSNHNDGKGGSVSPNDDDTH) are disordered.

Its subcellular location is the nucleus. The chain is Zinc finger protein STP3 (STP3) from Saccharomyces cerevisiae (strain ATCC 204508 / S288c) (Baker's yeast).